Here is a 340-residue protein sequence, read N- to C-terminus: Large ribosomal subunit protein uL29m (340 aa).

Over residues 1–10 the composition is skewed to polar residues; it reads MIRSLHTSAV. The interval 1 to 22 is disordered; that stretch reads MIRSLHTSAVRQGRKKWPKPLP.

This sequence belongs to the universal ribosomal protein uL29 family. As to quaternary structure, component of the mitochondrial large ribosomal subunit. Mature mitochondrial ribosomes consist of a small (37S) and a large (54S) subunit. The 37S subunit contains at least 33 different proteins and 1 molecule of RNA (15S). The 54S subunit contains at least 45 different proteins and 1 molecule of RNA (21S).

The protein resides in the mitochondrion. In Yarrowia lipolytica (strain CLIB 122 / E 150) (Yeast), this protein is Large ribosomal subunit protein uL29m (MRPL4).